A 134-amino-acid chain; its full sequence is Cytochrome b5 (134 aa).

An N-acetylalanine modification is found at Ala2. Residues Lys7, Lys10, and Lys19 each carry the N6-acetyllysine modification. The Cytochrome b5 heme-binding domain maps to 9–85 (VKYYTLEEIK…SKTFIIGELH (77 aa)). 2 residues coordinate heme: His44 and His68. The helical transmembrane segment at 109–131 (WWTNWVIPAISALIVALMYRLYM) threads the bilayer.

Belongs to the cytochrome b5 family.

The protein resides in the endoplasmic reticulum membrane. Its subcellular location is the microsome membrane. Cytochrome b5 is a membrane-bound hemoprotein functioning as an electron carrier for several membrane-bound oxygenases. This is Cytochrome b5 (CYB5A) from Oryctolagus cuniculus (Rabbit).